We begin with the raw amino-acid sequence, 89 residues long: Large ribosomal subunit protein eL43 (89 aa).

Zn(2+) is bound by residues cysteine 38, cysteine 41, cysteine 56, and cysteine 59. The C4-type zinc-finger motif lies at 38 to 59 (CPSCDRPGVKRESRGIWKCRKC).

It belongs to the eukaryotic ribosomal protein eL43 family. Putative zinc-binding subfamily. In terms of assembly, part of the 50S ribosomal subunit. Zn(2+) is required as a cofactor.

Binds to the 23S rRNA. The sequence is that of Large ribosomal subunit protein eL43 from Methanothermobacter thermautotrophicus (strain ATCC 29096 / DSM 1053 / JCM 10044 / NBRC 100330 / Delta H) (Methanobacterium thermoautotrophicum).